A 461-amino-acid chain; its full sequence is Cysteine--tRNA ligase (461 aa).

C29 lines the Zn(2+) pocket. Positions 31-41 match the 'HIGH' region motif; it reads MTVYDFCHIGH. Residues C210, H235, and E239 each contribute to the Zn(2+) site. Residues 267-271 carry the 'KMSKS' region motif; sequence KMSKS. K270 serves as a coordination point for ATP.

The protein belongs to the class-I aminoacyl-tRNA synthetase family. As to quaternary structure, monomer. It depends on Zn(2+) as a cofactor.

The protein localises to the cytoplasm. The catalysed reaction is tRNA(Cys) + L-cysteine + ATP = L-cysteinyl-tRNA(Cys) + AMP + diphosphate. In Stutzerimonas stutzeri (strain A1501) (Pseudomonas stutzeri), this protein is Cysteine--tRNA ligase.